The sequence spans 78 residues: Toxin-like protein 10 (78 aa).

Residues Met1–Cys23 form the signal peptide.

In terms of processing, contains 4 disulfide bonds. Expressed by the venom gland.

It localises to the secreted. The polypeptide is Toxin-like protein 10 (Urodacus yaschenkoi (Inland robust scorpion)).